The following is a 114-amino-acid chain: Hydrogenase maturation factor HypA (114 aa).

Position 2 (His-2) interacts with Ni(2+). Residues Cys-70, Cys-73, Cys-86, and Cys-89 each contribute to the Zn(2+) site.

This sequence belongs to the HypA/HybF family.

In terms of biological role, involved in the maturation of [NiFe] hydrogenases. Required for nickel insertion into the metal center of the hydrogenase. The protein is Hydrogenase maturation factor HypA of Rippkaea orientalis (strain PCC 8801 / RF-1) (Cyanothece sp. (strain PCC 8801)).